A 341-amino-acid polypeptide reads, in one-letter code: Guanine nucleotide-binding protein subunit beta (341 aa).

WD repeat units lie at residues 54–84 (GHLA…IVWD), 96–126 (LRSS…SIYS), 142–171 (GHTG…ALWN), 183–213 (GHTG…KLFD), 225–255 (GHES…RLFD), 269–299 (NIIC…NVWD), and 311–341 (GHDN…KIWN).

The protein belongs to the WD repeat G protein beta family. In terms of assembly, g proteins are composed of 3 units, alpha, beta and gamma.

In terms of biological role, guanine nucleotide-binding proteins (G proteins) are involved as a modulator or transducer in various transmembrane signaling systems. The beta and gamma chains are required for the GTPase activity, for replacement of GDP by GTP, and for G protein-effector interaction. The polypeptide is Guanine nucleotide-binding protein subunit beta (Loligo forbesii (Veined squid)).